Here is a 421-residue protein sequence, read N- to C-terminus: 4-hydroxy-3-methylbut-2-en-1-yl diphosphate synthase (flavodoxin) (421 aa).

[4Fe-4S] cluster is bound by residues Cys-300, Cys-303, Cys-346, and Glu-353.

The protein belongs to the IspG family. The cofactor is [4Fe-4S] cluster.

The enzyme catalyses (2E)-4-hydroxy-3-methylbut-2-enyl diphosphate + oxidized [flavodoxin] + H2O + 2 H(+) = 2-C-methyl-D-erythritol 2,4-cyclic diphosphate + reduced [flavodoxin]. It participates in isoprenoid biosynthesis; isopentenyl diphosphate biosynthesis via DXP pathway; isopentenyl diphosphate from 1-deoxy-D-xylulose 5-phosphate: step 5/6. Its function is as follows. Converts 2C-methyl-D-erythritol 2,4-cyclodiphosphate (ME-2,4cPP) into 1-hydroxy-2-methyl-2-(E)-butenyl 4-diphosphate. In Laribacter hongkongensis (strain HLHK9), this protein is 4-hydroxy-3-methylbut-2-en-1-yl diphosphate synthase (flavodoxin).